The chain runs to 407 residues: Imidazolonepropionase (407 aa).

Residues histidine 68 and histidine 70 each coordinate Fe(3+). Zn(2+)-binding residues include histidine 68 and histidine 70. 4-imidazolone-5-propanoate is bound by residues arginine 77, tyrosine 140, and histidine 173. Tyrosine 140 lines the N-formimidoyl-L-glutamate pocket. Residue histidine 238 participates in Fe(3+) binding. Histidine 238 contributes to the Zn(2+) binding site. Position 241 (glutamine 241) interacts with 4-imidazolone-5-propanoate. Aspartate 313 is a Fe(3+) binding site. Aspartate 313 contacts Zn(2+). Positions 315 and 317 each coordinate N-formimidoyl-L-glutamate. Threonine 318 contacts 4-imidazolone-5-propanoate.

This sequence belongs to the metallo-dependent hydrolases superfamily. HutI family. Zn(2+) is required as a cofactor. It depends on Fe(3+) as a cofactor.

Its subcellular location is the cytoplasm. The catalysed reaction is 4-imidazolone-5-propanoate + H2O = N-formimidoyl-L-glutamate. It participates in amino-acid degradation; L-histidine degradation into L-glutamate; N-formimidoyl-L-glutamate from L-histidine: step 3/3. Catalyzes the hydrolytic cleavage of the carbon-nitrogen bond in imidazolone-5-propanoate to yield N-formimidoyl-L-glutamate. It is the third step in the universal histidine degradation pathway. The polypeptide is Imidazolonepropionase (Burkholderia pseudomallei (strain 668)).